The primary structure comprises 126 residues: Small ribosomal subunit protein uS13 (126 aa).

Positions 93–126 are disordered; that stretch reads RRGLPVRGQRTKTNARTRKGPKRTVAGKKKAGRK.

The protein belongs to the universal ribosomal protein uS13 family. As to quaternary structure, part of the 30S ribosomal subunit. Forms a loose heterodimer with protein S19. Forms two bridges to the 50S subunit in the 70S ribosome.

Its function is as follows. Located at the top of the head of the 30S subunit, it contacts several helices of the 16S rRNA. In the 70S ribosome it contacts the 23S rRNA (bridge B1a) and protein L5 of the 50S subunit (bridge B1b), connecting the 2 subunits; these bridges are implicated in subunit movement. Contacts the tRNAs in the A and P-sites. The protein is Small ribosomal subunit protein uS13 of Beutenbergia cavernae (strain ATCC BAA-8 / DSM 12333 / CCUG 43141 / JCM 11478 / NBRC 16432 / NCIMB 13614 / HKI 0122).